A 60-amino-acid chain; its full sequence is Large ribosomal subunit protein bL32 (60 aa).

The span at 1 to 23 (MAKHPVPKKKTSKARRDARRSHH) shows a compositional bias: basic residues. Residues 1–30 (MAKHPVPKKKTSKARRDARRSHHALTPPTL) are disordered.

Part of the 50S ribosomal subunit.

Its function is as follows. Found on the solvent side of the large subunit. This chain is Large ribosomal subunit protein bL32 (rpmF), found in Thermus thermophilus (strain ATCC 27634 / DSM 579 / HB8).